Here is a 329-residue protein sequence, read N- to C-terminus: Sex comb on midleg-like protein 1 (329 aa).

Ser138 and Ser238 each carry phosphoserine. The disordered stretch occupies residues 138 to 157; that stretch reads SPTLPVSRRENNSPSNLPRP. Residues 258–325 enclose the SAM domain; that stretch reads WSVEAVVLFL…YYIDRLKQGK (68 aa).

This sequence belongs to the SCM family.

It localises to the nucleus. Its function is as follows. Putative Polycomb group (PcG) protein. PcG proteins act by forming multiprotein complexes, which are required to maintain the transcriptionally repressive state of homeotic genes throughout development. May be involved in spermatogenesis during sexual maturation. The chain is Sex comb on midleg-like protein 1 (SCML1) from Pan troglodytes (Chimpanzee).